Reading from the N-terminus, the 380-residue chain is Cytochrome b (380 aa).

The next 4 membrane-spanning stretches (helical) occupy residues 33–53 (FGSL…FLAM), 77–98 (WLIR…YLHI), 113–133 (WNVG…GYVL), and 178–198 (FFAF…LHLL). Heme b-binding residues include His-83 and His-97. 2 residues coordinate heme b: His-182 and His-196. His-201 lines the a ubiquinone pocket. 4 consecutive transmembrane segments (helical) span residues 226–246 (YKDL…ALFS), 288–308 (LGGV…PILH), 320–340 (FSQI…WIGG), and 347–367 (YIII…VFFP).

This sequence belongs to the cytochrome b family. In terms of assembly, the cytochrome bc1 complex contains 3 respiratory subunits (MT-CYB, CYC1 and UQCRFS1), 2 core proteins (UQCRC1 and UQCRC2) and probably 6 low-molecular weight proteins. Heme b serves as cofactor.

The protein resides in the mitochondrion inner membrane. Its function is as follows. Component of the ubiquinol-cytochrome c reductase complex (complex III or cytochrome b-c1 complex) that is part of the mitochondrial respiratory chain. The b-c1 complex mediates electron transfer from ubiquinol to cytochrome c. Contributes to the generation of a proton gradient across the mitochondrial membrane that is then used for ATP synthesis. The sequence is that of Cytochrome b (mt-cyb) from Apogon semilineatus (Half-lined cardinal).